We begin with the raw amino-acid sequence, 154 residues long: Nascent polypeptide-associated complex subunit beta (154 aa).

The region spanning 34–99 (EQDDTKLIEA…PQEKDVTQLI (66 aa)) is the NAC-A/B domain. Positions 125–154 (KNPELNAGGAEGAEEDIPDLIEGQKFDDVE) are disordered.

It belongs to the NAC-beta family. In terms of assembly, part of the nascent polypeptide-associated complex (NAC), consisting of EGD2 and EGD1. NAC associates with ribosomes via EGD1.

It is found in the cytoplasm. The protein resides in the nucleus. Component of the nascent polypeptide-associated complex (NAC), a dynamic component of the ribosomal exit tunnel, protecting the emerging polypeptides from interaction with other cytoplasmic proteins to ensure appropriate nascent protein targeting. The NAC complex also promotes mitochondrial protein import by enhancing productive ribosome interactions with the outer mitochondrial membrane and blocks the inappropriate interaction of ribosomes translating non-secretory nascent polypeptides with translocation sites in the membrane of the endoplasmic reticulum. EGD1 may act as a transcription factor that exert a negative effect on the expression of several genes that are transcribed by RNA polymerase II. This Debaryomyces hansenii (strain ATCC 36239 / CBS 767 / BCRC 21394 / JCM 1990 / NBRC 0083 / IGC 2968) (Yeast) protein is Nascent polypeptide-associated complex subunit beta (EGD1).